A 164-amino-acid chain; its full sequence is ATP synthase subunit b (164 aa).

Residues 12-32 (FILVTGSVIVLLLLIKAFAWG) traverse the membrane as a helical segment.

Belongs to the ATPase B chain family. In terms of assembly, F-type ATPases have 2 components, F(1) - the catalytic core - and F(0) - the membrane proton channel. F(1) has five subunits: alpha(3), beta(3), gamma(1), delta(1), epsilon(1). F(0) has three main subunits: a(1), b(2) and c(10-14). The alpha and beta chains form an alternating ring which encloses part of the gamma chain. F(1) is attached to F(0) by a central stalk formed by the gamma and epsilon chains, while a peripheral stalk is formed by the delta and b chains.

The protein localises to the cell membrane. In terms of biological role, f(1)F(0) ATP synthase produces ATP from ADP in the presence of a proton or sodium gradient. F-type ATPases consist of two structural domains, F(1) containing the extramembraneous catalytic core and F(0) containing the membrane proton channel, linked together by a central stalk and a peripheral stalk. During catalysis, ATP synthesis in the catalytic domain of F(1) is coupled via a rotary mechanism of the central stalk subunits to proton translocation. Component of the F(0) channel, it forms part of the peripheral stalk, linking F(1) to F(0). This is ATP synthase subunit b from Streptococcus equi subsp. zooepidemicus (strain MGCS10565).